The chain runs to 324 residues: Malate dehydrogenase (324 aa).

NAD(+)-binding positions include 20-25 (GAGNVG) and D44. Substrate is bound by residues R93 and R99. NAD(+) is bound by residues N106 and 129-131 (VTN). Substrate contacts are provided by N131 and R162. Residue H186 is the Proton acceptor of the active site.

The protein belongs to the LDH/MDH superfamily. MDH type 3 family.

The enzyme catalyses (S)-malate + NAD(+) = oxaloacetate + NADH + H(+). Functionally, catalyzes the reversible oxidation of malate to oxaloacetate. In Synechocystis sp. (strain ATCC 27184 / PCC 6803 / Kazusa), this protein is Malate dehydrogenase.